We begin with the raw amino-acid sequence, 209 residues long: Pyridoxine/pyridoxamine 5'-phosphate oxidase (209 aa).

Residues 2-5 (RVEY) and lysine 66 contribute to the substrate site. Residues 61 to 66 (RTVLCK), 76 to 77 (FT), lysine 83, and glutamine 105 each bind FMN. Substrate-binding residues include tyrosine 123, arginine 127, and serine 131. Residues 140-141 (QS) and tryptophan 186 each bind FMN. 192-194 (RVH) serves as a coordination point for substrate. Residue arginine 196 participates in FMN binding.

The protein belongs to the pyridoxamine 5'-phosphate oxidase family. In terms of assembly, homodimer. It depends on FMN as a cofactor.

It carries out the reaction pyridoxamine 5'-phosphate + O2 + H2O = pyridoxal 5'-phosphate + H2O2 + NH4(+). The catalysed reaction is pyridoxine 5'-phosphate + O2 = pyridoxal 5'-phosphate + H2O2. The protein operates within cofactor metabolism; pyridoxal 5'-phosphate salvage; pyridoxal 5'-phosphate from pyridoxamine 5'-phosphate: step 1/1. It participates in cofactor metabolism; pyridoxal 5'-phosphate salvage; pyridoxal 5'-phosphate from pyridoxine 5'-phosphate: step 1/1. Its function is as follows. Catalyzes the oxidation of either pyridoxine 5'-phosphate (PNP) or pyridoxamine 5'-phosphate (PMP) into pyridoxal 5'-phosphate (PLP). This chain is Pyridoxine/pyridoxamine 5'-phosphate oxidase, found in Mycobacterium sp. (strain JLS).